Here is a 185-residue protein sequence, read N- to C-terminus: Ribosome-recycling factor (185 aa).

This sequence belongs to the RRF family.

It localises to the cytoplasm. Responsible for the release of ribosomes from messenger RNA at the termination of protein biosynthesis. May increase the efficiency of translation by recycling ribosomes from one round of translation to another. The polypeptide is Ribosome-recycling factor (Pseudothermotoga lettingae (strain ATCC BAA-301 / DSM 14385 / NBRC 107922 / TMO) (Thermotoga lettingae)).